Reading from the N-terminus, the 516-residue chain is Apolipoprotein N-acyltransferase (516 aa).

6 helical membrane passes run L24 to L44, G58 to H78, L90 to W110, L125 to F145, A163 to V183, and P192 to L212. Residues V230–P471 enclose the CN hydrolase domain. E270 functions as the Proton acceptor in the catalytic mechanism. Residue K331 is part of the active site. The Nucleophile role is filled by C383. The helical transmembrane segment at L479–L499 threads the bilayer.

The protein belongs to the CN hydrolase family. Apolipoprotein N-acyltransferase subfamily.

The protein localises to the cell inner membrane. The catalysed reaction is N-terminal S-1,2-diacyl-sn-glyceryl-L-cysteinyl-[lipoprotein] + a glycerophospholipid = N-acyl-S-1,2-diacyl-sn-glyceryl-L-cysteinyl-[lipoprotein] + a 2-acyl-sn-glycero-3-phospholipid + H(+). The protein operates within protein modification; lipoprotein biosynthesis (N-acyl transfer). Its function is as follows. Catalyzes the phospholipid dependent N-acylation of the N-terminal cysteine of apolipoprotein, the last step in lipoprotein maturation. The sequence is that of Apolipoprotein N-acyltransferase from Azotobacter vinelandii (strain DJ / ATCC BAA-1303).